The following is a 531-amino-acid chain: Cation transporter HKT1;3 (531 aa).

Topologically, residues 1–46 are cytoplasmic; it reads MNHCLVVSHKKLQTFRTFAASKFSSFTKSAQKSIKYSFQFIYQNNP. A run of 2 helical transmembrane segments spans residues 47–67 and 108–128; these read LFVH…SLKV and LWVL…MLGI. At 129-190 the chain is on the cytoplasmic side; that stretch reads HFMRAEFGTK…GGHVEPKTIK (62 aa). Helical transmembrane passes span 191–211 and 264–284; these read FLGF…SLLI and ILLL…APCL. Residues 285 to 321 are Cytoplasmic-facing; it reads RLMVWSLEKITGKKDCRYILEYPKAIGYKHLMSTRES. Helical transmembrane passes span 322 to 342 and 383 to 403; these read VYLT…FLSL and SAIL…SFLP. The Cytoplasmic portion of the chain corresponds to 404–421; that stretch reads RHDGEDSKTEKINKRKGL. 2 consecutive transmembrane segments (helical) span residues 422-442 and 494-514; these read LENW…LICI and YGFA…VMLF. The Cytoplasmic portion of the chain corresponds to 515-530; the sequence is GRLKTFNMKGGRAWKL.

It belongs to the TrkH potassium transport family. HKT (TC 2.A.38.3) subfamily. In terms of assembly, interacts with CNIH1. As to expression, weakly expressed. In roots, expressed in epidermis, exodermis, cortex, and sieve elements and companion cells of phloem. In mature leaves, expressed in large highly vacuolated cells of the adaxial epidermis, phloem and xylem.

It localises to the endoplasmic reticulum membrane. It is found in the golgi apparatus membrane. It catalyses the reaction Na(+)(in) = Na(+)(out). Functionally, functions as a highly-selective sodium transporter. Does not seem to function as sodium-potassium cotransporter. May be involved in turgor changes for rolling and unrolling of leaves in response to environmental variations. This chain is Cation transporter HKT1;3, found in Oryza sativa subsp. japonica (Rice).